Reading from the N-terminus, the 314-residue chain is Beta-ketoacyl-[acyl-carrier-protein] synthase III (314 aa).

Active-site residues include C112 and H241. The tract at residues 242–246 (QANIR) is ACP-binding. N271 is an active-site residue.

This sequence belongs to the thiolase-like superfamily. FabH family. In terms of assembly, homodimer.

The protein resides in the cytoplasm. The catalysed reaction is malonyl-[ACP] + acetyl-CoA + H(+) = 3-oxobutanoyl-[ACP] + CO2 + CoA. The protein operates within lipid metabolism; fatty acid biosynthesis. Its function is as follows. Catalyzes the condensation reaction of fatty acid synthesis by the addition to an acyl acceptor of two carbons from malonyl-ACP. Catalyzes the first condensation reaction which initiates fatty acid synthesis and may therefore play a role in governing the total rate of fatty acid production. Possesses both acetoacetyl-ACP synthase and acetyl transacylase activities. Its substrate specificity determines the biosynthesis of branched-chain and/or straight-chain of fatty acids. In Vesicomyosocius okutanii subsp. Calyptogena okutanii (strain HA), this protein is Beta-ketoacyl-[acyl-carrier-protein] synthase III.